A 73-amino-acid chain; its full sequence is Translation initiation factor IF-1 (73 aa).

An S1-like domain is found at 1–72; sequence MAKEDAIEVE…NRGRITYRSK (72 aa).

This sequence belongs to the IF-1 family. In terms of assembly, component of the 30S ribosomal translation pre-initiation complex which assembles on the 30S ribosome in the order IF-2 and IF-3, IF-1 and N-formylmethionyl-tRNA(fMet); mRNA recruitment can occur at any time during PIC assembly.

Its subcellular location is the cytoplasm. One of the essential components for the initiation of protein synthesis. Stabilizes the binding of IF-2 and IF-3 on the 30S subunit to which N-formylmethionyl-tRNA(fMet) subsequently binds. Helps modulate mRNA selection, yielding the 30S pre-initiation complex (PIC). Upon addition of the 50S ribosomal subunit IF-1, IF-2 and IF-3 are released leaving the mature 70S translation initiation complex. The chain is Translation initiation factor IF-1 from Syntrophobacter fumaroxidans (strain DSM 10017 / MPOB).